The chain runs to 702 residues: MKNIFFICFCALFAFSGCADDDDDLLTGGNVDIDLLPDAKPNDVVDPQVFEAINLNYPGLEKVKEFYEAGEHYYAANALLEYYRTRTNVTNPNLSLINVTISEAEQAKADYALVDYRFHVNNFYEDKETLKPYSVKQDGGINWEYSPKDASDEYQKQLHRHQWFIPQAKAYRVSGDEKYIQSWIEVYKNWIENNPKPTTGPNTTSWWQLQVSTRIGDQVQLLEYFKNSVNFTPEWLSTFLVEFAEQADFLVDYPYESGGNILISQANALATAGTLMPEFKNAEKWMNTGYQILSEEVQNQIMSDGWHKEMSLHYHIGIVADFYEAMKLAEANQLSSKLPSDFTEPLRKAAEVVMYFTYPNYFIKGSDNVVPMFNDSWSRTRNVLKNTNFKQYVEMFPDSEELKYMQTAGNGGTAQGRTPNNDMKLFDQAGYYVLRNGWTPASTVMILSNNKSNDASNSLSAYSHNQPDNGTFELYHNGRNFFPDSGVCTYYTSGGDNDLRYWFRGIDKHNTLSIGKQNIKKAAGKLLKSEEGATELVVFENQGYDNLKHRRAVFYVNKKFFVLVDEGIGNAEGTINLSFNLCEGTASEVVMDTDKNGVHTAFSNNNNIIVRTFANKAVTCSPFTGRIAYLVDGAYNTRQSYTIDMNKSADETARYITVILPVNGSTDTSSISAKFIDSGYSENSASVEVSVNGETHTLSYTL.

A signal peptide spans Met-1–Gly-17. Residue Tyr-314 is the Proton acceptor of the active site.

This sequence belongs to the polysaccharide lyase 12 family.

Its subcellular location is the periplasm. It carries out the reaction Elimination of sulfate, appears to act on linkages between N-acetyl-D-glucosamine and uronate. Product is an unsaturated sugar.. In terms of biological role, specifically cleaves heparan sulfate-rich regions of acidic polysaccharides. Does not act on N,O-desulfated glucosamine or N-acetyl-O-sulfated glucosamine linkages. Functions in cleaving metazoan heparan sulfate and providing carbon, nitrogen and sulfate sources for microorganisms. The polypeptide is Heparin-sulfate lyase (hepC) (Bacteroides thetaiotaomicron (strain ATCC 29148 / DSM 2079 / JCM 5827 / CCUG 10774 / NCTC 10582 / VPI-5482 / E50)).